The sequence spans 127 residues: Small ribosomal subunit protein uS11 (127 aa).

It belongs to the universal ribosomal protein uS11 family. As to quaternary structure, part of the 30S ribosomal subunit.

Its function is as follows. Located on the platform of the 30S subunit. This is Small ribosomal subunit protein uS11 from Halobacterium salinarum (strain ATCC 700922 / JCM 11081 / NRC-1) (Halobacterium halobium).